The sequence spans 376 residues: Eugenol O-methyltransferase (376 aa).

4 residues coordinate S-adenosyl-L-methionine: glycine 219, aspartate 242, methionine 263, and lysine 276. Histidine 280 acts as the Proton acceptor in catalysis.

Belongs to the class I-like SAM-binding methyltransferase superfamily. Cation-independent O-methyltransferase family. COMT subfamily. As to quaternary structure, homodimer. Expressed predominantly in root hairs.

The enzyme catalyses (E)-isoeugenol + S-adenosyl-L-methionine = (E)-isomethyleugenol + S-adenosyl-L-homocysteine + H(+). O-methyltransferase. Substrate preference is eugenol &gt;&gt; orcinol monomethyl ether &gt; resorcinol monomethyl ether. The chain is Eugenol O-methyltransferase (EOMT) from Sorghum bicolor (Sorghum).